Consider the following 113-residue polypeptide: Beta-defensin 112 (113 aa).

Intrachain disulfides connect C54–C82, C61–C75, and C65–C83.

Belongs to the beta-defensin family.

It is found in the secreted. Its function is as follows. Has antibacterial activity. The sequence is that of Beta-defensin 112 (DEFB112) from Pan troglodytes (Chimpanzee).